Reading from the N-terminus, the 1021-residue chain is 2-oxoglutarate dehydrogenase complex component E1 (1021 aa).

Residues 1-40 (MFNLRTCASKLRPLTASQTIRSLKHNRPAAPRTFQQFRCL) constitute a mitochondrion transit peptide. The Ca(2+) site is built by H142, D155, and D157. Positions 311, 410, 443, and 445 each coordinate thiamine diphosphate. Residues D410, N443, and I445 each contribute to the Mg(2+) site. A Glycyl lysine isopeptide (Lys-Gly) (interchain with G-Cter in ubiquitin) cross-link involves residue K533. A thiamine diphosphate-binding site is contributed by Q675.

It belongs to the alpha-ketoglutarate dehydrogenase family. Homodimer. The 2-oxoglutarate dehydrogenase complex is composed of OGDH (2-oxoglutarate dehydrogenase; E1), DLST (dihydrolipoamide succinyltransferase; E2) and DLD (dihydrolipoamide dehydrogenase; E3). It contains multiple copies of the three enzymatic components (E1, E2 and E3). In the nucleus, the 2-oxoglutarate dehydrogenase complex associates with kat2a. Thiamine diphosphate serves as cofactor. Requires Mg(2+) as cofactor. As to expression, expressed in the brain.

The protein localises to the mitochondrion. It localises to the nucleus. It catalyses the reaction N(6)-[(R)-lipoyl]-L-lysyl-[protein] + 2-oxoglutarate + H(+) = N(6)-[(R)-S(8)-succinyldihydrolipoyl]-L-lysyl-[protein] + CO2. Calcium ions and ADP stimulate, whereas ATP and NADH reduce catalytic activity. Its function is as follows. 2-oxoglutarate dehydrogenase (E1o) component of the 2-oxoglutarate dehydrogenase complex (OGDHC). Participates in the first step, rate limiting for the overall conversion of 2-oxoglutarate to succinyl-CoA and CO(2) catalyzed by the whole OGDHC. Catalyzes the irreversible decarboxylation of 2-oxoglutarate (alpha-ketoglutarate) via the thiamine diphosphate (ThDP) cofactor and subsequent transfer of the decarboxylated acyl intermediate on an oxidized dihydrolipoyl group that is covalently amidated to the E2 enzyme (dihydrolipoyllysine-residue succinyltransferase or DLST). Plays a key role in the Krebs (citric acid) cycle, which is a common pathway for oxidation of fuel molecules, including carbohydrates, fatty acids, and amino acids. Can catalyze the decarboxylation of 2-oxoadipate in vitro, but at a much lower rate than 2-oxoglutarate. Mainly active in the mitochondrion. A fraction of the 2-oxoglutarate dehydrogenase complex also localizes in the nucleus and is required for lysine succinylation of histones: associates with KAT2A on chromatin and provides succinyl-CoA to histone succinyltransferase KAT2A. This Xenopus laevis (African clawed frog) protein is 2-oxoglutarate dehydrogenase complex component E1 (ogdh).